We begin with the raw amino-acid sequence, 274 residues long: Small ribosomal subunit biogenesis GTPase RsgA (274 aa).

A CP-type G domain is found at lysine 58–tyrosine 215. GTP-binding positions include serine 108 to aspartate 111 and glycine 158 to threonine 166. Zn(2+) is bound by residues cysteine 238, cysteine 243, histidine 245, and cysteine 252.

Belongs to the TRAFAC class YlqF/YawG GTPase family. RsgA subfamily. As to quaternary structure, monomer. Associates with 30S ribosomal subunit, binds 16S rRNA. The cofactor is Zn(2+).

The protein resides in the cytoplasm. In terms of biological role, one of several proteins that assist in the late maturation steps of the functional core of the 30S ribosomal subunit. Helps release RbfA from mature subunits. May play a role in the assembly of ribosomal proteins into the subunit. Circularly permuted GTPase that catalyzes slow GTP hydrolysis, GTPase activity is stimulated by the 30S ribosomal subunit. This is Small ribosomal subunit biogenesis GTPase RsgA from Mycoplasmoides gallisepticum (strain R(low / passage 15 / clone 2)) (Mycoplasma gallisepticum).